Here is a 92-residue protein sequence, read N- to C-terminus: Progonadoliberin-1 (92 aa).

The N-terminal stretch at 1 to 23 (MEKSRKILVGVLLFTASVAICLA) is a signal peptide. Pyrrolidone carboxylic acid is present on Gln-24. Position 33 is a glycine amide (Gly-33).

The protein belongs to the GnRH family.

Its subcellular location is the secreted. In terms of biological role, stimulates the secretion of gonadotropins. This chain is Progonadoliberin-1 (GNRH1), found in Gallus gallus (Chicken).